A 405-amino-acid polypeptide reads, in one-letter code: Arginine biosynthesis bifunctional protein ArgJ (405 aa).

Thr-167, Lys-190, Thr-201, Glu-281, Asn-400, and Ser-405 together coordinate substrate. Thr-201 serves as the catalytic Nucleophile.

This sequence belongs to the ArgJ family. In terms of assembly, heterotetramer of two alpha and two beta chains.

The protein localises to the cytoplasm. The enzyme catalyses N(2)-acetyl-L-ornithine + L-glutamate = N-acetyl-L-glutamate + L-ornithine. The catalysed reaction is L-glutamate + acetyl-CoA = N-acetyl-L-glutamate + CoA + H(+). It participates in amino-acid biosynthesis; L-arginine biosynthesis; L-ornithine and N-acetyl-L-glutamate from L-glutamate and N(2)-acetyl-L-ornithine (cyclic): step 1/1. It functions in the pathway amino-acid biosynthesis; L-arginine biosynthesis; N(2)-acetyl-L-ornithine from L-glutamate: step 1/4. In terms of biological role, catalyzes two activities which are involved in the cyclic version of arginine biosynthesis: the synthesis of N-acetylglutamate from glutamate and acetyl-CoA as the acetyl donor, and of ornithine by transacetylation between N(2)-acetylornithine and glutamate. In Nocardia farcinica (strain IFM 10152), this protein is Arginine biosynthesis bifunctional protein ArgJ.